The sequence spans 103 residues: ATP-dependent Clp protease adapter protein ClpS (103 aa).

Belongs to the ClpS family. As to quaternary structure, binds to the N-terminal domain of the chaperone ClpA.

Involved in the modulation of the specificity of the ClpAP-mediated ATP-dependent protein degradation. The protein is ATP-dependent Clp protease adapter protein ClpS of Neisseria meningitidis serogroup A / serotype 4A (strain DSM 15465 / Z2491).